The primary structure comprises 754 residues: Subtilisin-like protease SBT3.12 (754 aa).

Positions 1-28 (MGIVKGRSRAGLFIGFLFIVNVGFCVFA) are cleaved as a signal peptide. Residues 29–117 (QESSNEERKI…VAPNRKVELQ (89 aa)) constitute a propeptide, activation peptide. An Inhibitor I9 domain is found at 39-116 (YVVHLGVRRH…SVAPNRKVEL (78 aa)). The region spanning 121–606 (IYDYLGLSPS…AGLVNAERAK (486 aa)) is the Peptidase S8 domain. The Charge relay system role is filled by Asp151. A glycan (N-linked (GlcNAc...) asparagine) is linked at Asn206. The active-site Charge relay system is the His224. Residues Asn239 and Asn369 are each glycosylated (N-linked (GlcNAc...) asparagine). The Charge relay system role is filled by Ser537. Asn629 and Asn740 each carry an N-linked (GlcNAc...) asparagine glycan.

It belongs to the peptidase S8 family.

It localises to the secreted. In Arabidopsis thaliana (Mouse-ear cress), this protein is Subtilisin-like protease SBT3.12.